A 316-amino-acid chain; its full sequence is tRNA dimethylallyltransferase (316 aa).

Residue 17–24 participates in ATP binding; sequence GPTASGKT. 19 to 24 serves as a coordination point for substrate; it reads TASGKT. Interaction with substrate tRNA stretches follow at residues 42–45, 166–170, and 247–252; these read DSAL, QRLSR, and RCVGYR.

Belongs to the IPP transferase family. In terms of assembly, monomer. Requires Mg(2+) as cofactor.

The catalysed reaction is adenosine(37) in tRNA + dimethylallyl diphosphate = N(6)-dimethylallyladenosine(37) in tRNA + diphosphate. Its function is as follows. Catalyzes the transfer of a dimethylallyl group onto the adenine at position 37 in tRNAs that read codons beginning with uridine, leading to the formation of N6-(dimethylallyl)adenosine (i(6)A). The protein is tRNA dimethylallyltransferase of Salmonella enteritidis PT4 (strain P125109).